We begin with the raw amino-acid sequence, 136 residues long: Single-stranded DNA-binding protein 1 (136 aa).

The SSB domain maps to 4-109; it reads LNKMQLIGNL…IMAKEMQMLG (106 aa). Residues 109 to 136 are disordered; the sequence is GKKQDNNKVGNARHGDALPADEDDYYDF. The span at 127-136 shows a compositional bias: acidic residues; it reads PADEDDYYDF.

In terms of assembly, homotetramer.

The chain is Single-stranded DNA-binding protein 1 (ssb1) from Xylella fastidiosa (strain 9a5c).